A 119-amino-acid chain; its full sequence is Beta-2-microglobulin (119 aa).

A signal peptide spans 1–20 (MARSVVVSLFVLLALAGLEA). Residues 25-114 (PKIQVYSRHP…VTFQTPKTVK (90 aa)) form the Ig-like C1-type domain.

The protein belongs to the beta-2-microglobulin family. As to quaternary structure, heterodimer of an alpha chain and a beta chain. Beta-2-microglobulin is the beta-chain of major histocompatibility complex class I molecules.

The protein resides in the secreted. Functionally, component of the class I major histocompatibility complex (MHC). Involved in the presentation of peptide antigens to the immune system. The polypeptide is Beta-2-microglobulin (B2M) (Brachyteles arachnoides (Southern muriqui)).